A 262-amino-acid polypeptide reads, in one-letter code: MDINASRALANVYDLPDDFFPKIDDLVRDAKDALEPYWKSDSIKKHVLIATHFVDLIEDFWQTTQGMHEIAESLRAVIPPTTTPVPPGYLIQHEEAEEIPLGDLFKHQEERIVSFQPDYPITARIHAHLKAYAKINEESLDRARRLLWWHYNCLLWGEAQVTNYISRLRTWLSTPEKYRGRDAPTIEAITRPIQVAQGGRKTTTGTRKPRGLEPRRRKVKTTVVYGRRRSKSRERRAPTPQRAGSPLPRSSSSHHRSPSPRK.

Residues 183-262 are disordered; sequence APTIEAITRP…SHHRSPSPRK (80 aa). The short motif at 215 to 233 is the Bipartite nuclear localization signal element; it reads RRRKVKTTVVYGRRRSKSR. Residues 215 to 234 show a composition bias toward basic residues; it reads RRRKVKTTVVYGRRRSKSRE. Phosphoserine; by host is present on residues Ser-232 and Ser-245. Positions 252-262 are enriched in basic residues; sequence SSHHRSPSPRK. Residues 254-260 are RNA binding; that stretch reads HHRSPSP.

Belongs to the avihepadnavirus core antigen family. In terms of assembly, homodimerizes, then multimerizes.

The protein resides in the virion. It is found in the host cytoplasm. Self assembles to form an icosahedral capsid. Most capsid appear to be large particles with an icosahedral symmetry of T=4 and consist of 240 copies of capsid protein, though a fraction forms smaller T=3 particles consisting of 180 capsid proteins. Entering capsid are transported along microtubules to the nucleus. Phosphorylation of the capsid is thought to induce exposure of nuclear localization signal in the C-terminal portion of the capsid protein that allows binding to the nuclear pore complex via the importin (karyopherin-) alpha and beta. Capsids are imported in intact form through the nuclear pore into the nuclear basket, where it probably binds NUP153. Only capsids that contain the mature viral genome can release the viral DNA and capsid protein into the nucleoplasm. Immature capsids get stucked in the basket. Capsids encapsulate the pre-genomic RNA and the P protein. Pre-genomic RNA is reverse transcribed into DNA while the capsid is still in the cytoplasm. The capsid can then either be directed to the nucleus, providing more genome for transcription, or bud through the endoplasmic reticulum to provide new virions. This is Capsid protein (C) from Anas (ducks).